Here is a 350-residue protein sequence, read N- to C-terminus: Solute carrier family 35 member E4 (350 aa).

The span at 19–30 (GAAAGGAQAAGP) shows a compositional bias: low complexity. A disordered region spans residues 19–42 (GAAAGGAQAAGPPEWPPGSPQALR). A run of 8 helical transmembrane segments spans residues 51–71 (MAALVWLLAGASMSSLNKWIF), 73–93 (VHGFGRPLLLSALHMLVAALA), 110–132 (VLLLSLTFGTSMACGNVGLRAVP), 135–155 (LAQLVTTTTPLFTLALSALLL), 218–238 (VTLLYATSLPSFCLLAGAALV), 258–278 (ILLSCLLSVLYNLASFSLLAL), 279–299 (TSALTVHVLGNLTVVGNLILS), and 312–332 (YVGIALTLSGMFLYHNCEFVA). The EamA domain maps to 125–179 (NVGLRAVPLDLAQLVTTTTPLFTLALSALLLGRRHHPLQLAAMGPLCLGAACSLA).

It belongs to the TPT transporter family. SLC35E subfamily.

It is found in the membrane. Putative transporter. The sequence is that of Solute carrier family 35 member E4 (SLC35E4) from Homo sapiens (Human).